Here is a 253-residue protein sequence, read N- to C-terminus: Discoidin-1 subunit A (253 aa).

Position 2 is an N-acetylserine (serine 2). Positions 2–152 (STQGLVQLLA…ISLRCEFYTQ (151 aa)) constitute an F5/8 type C domain. The Cell attachment site motif lies at 79–81 (RGD).

As to quaternary structure, tetramer of four different chains (A to D). Stalk cells.

It localises to the cytoplasm. In terms of biological role, galactose- and N-acetylgalactosamine-binding lectin. May play a role in cell-substratum adhesion rather than in cell-cell adhesion. May be necessary for the maintenance of normal elongate morphology during aggregation. This is Discoidin-1 subunit A (dscA-1) from Dictyostelium discoideum (Social amoeba).